A 162-amino-acid chain; its full sequence is CASP-like protein 0U1 (162 aa).

The Cytoplasmic portion of the chain corresponds to 1–11; it reads MAAVEAAKTPR. A helical transmembrane segment spans residues 12-32; sequence FILLIIEWVFALVAFAVMGHY. Over 33-43 the chain is Extracellular; it reads LFDDRRSSFEY. Residues 44-64 traverse the membrane as a helical segment; it reads LTAICILVWLVVMIYMVILCC. At 65-69 the chain is on the cytoplasmic side; that stretch reads GRALP. The chain crosses the membrane as a helical span at residues 70 to 90; sequence PLIEAAIFLLFAILVFIAFLV. The Extracellular segment spans residues 91-123; that stretch reads TAVKCNNSETIVIAGQTISRKVCEGESEPKAAA. Asparagine 96 carries an N-linked (GlcNAc...) asparagine glycan. A helical membrane pass occupies residues 124-144; that stretch reads AFAFLLGLLLAGSSVLGCIAF. At 145–162 the chain is on the cytoplasmic side; that stretch reads RRPSAPPLSSFQNPTSSV.

The protein belongs to the Casparian strip membrane proteins (CASP) family. As to quaternary structure, homodimer and heterodimers.

The protein resides in the cell membrane. This chain is CASP-like protein 0U1, found in Chlorokybus atmophyticus (Soil alga).